Here is a 311-residue protein sequence, read N- to C-terminus: tRNA-cytidine(32) 2-sulfurtransferase (311 aa).

A PP-loop motif motif is present at residues 47–52 (SGGKDS). Positions 122, 125, and 213 each coordinate [4Fe-4S] cluster.

Belongs to the TtcA family. As to quaternary structure, homodimer. Requires Mg(2+) as cofactor. [4Fe-4S] cluster serves as cofactor.

It is found in the cytoplasm. The enzyme catalyses cytidine(32) in tRNA + S-sulfanyl-L-cysteinyl-[cysteine desulfurase] + AH2 + ATP = 2-thiocytidine(32) in tRNA + L-cysteinyl-[cysteine desulfurase] + A + AMP + diphosphate + H(+). It functions in the pathway tRNA modification. Its function is as follows. Catalyzes the ATP-dependent 2-thiolation of cytidine in position 32 of tRNA, to form 2-thiocytidine (s(2)C32). The sulfur atoms are provided by the cysteine/cysteine desulfurase (IscS) system. The polypeptide is tRNA-cytidine(32) 2-sulfurtransferase (Escherichia coli O1:K1 / APEC).